The sequence spans 157 residues: Ribosomal RNA large subunit methyltransferase H (157 aa).

Residues L73, G105, and 124–129 (LSRMTF) each bind S-adenosyl-L-methionine.

Belongs to the RNA methyltransferase RlmH family. Homodimer.

The protein resides in the cytoplasm. It carries out the reaction pseudouridine(1915) in 23S rRNA + S-adenosyl-L-methionine = N(3)-methylpseudouridine(1915) in 23S rRNA + S-adenosyl-L-homocysteine + H(+). In terms of biological role, specifically methylates the pseudouridine at position 1915 (m3Psi1915) in 23S rRNA. This chain is Ribosomal RNA large subunit methyltransferase H, found in Porphyromonas gingivalis (strain ATCC BAA-308 / W83).